The following is a 408-amino-acid chain: Interferon-activable protein 203 (408 aa).

The Pyrin domain maps to 1-87; it reads MAEYKNIVLL…AKKLKTEKAK (87 aa). The interval 84–208 is disordered; that stretch reads EKAKVQEKKK…EGHHQGPKQV (125 aa). Positions 92–102 are enriched in basic residues; that stretch reads KKGKCKTAGKK. Polar residues predominate over residues 150-159; that stretch reads AQLPETSGTN. Residues 190 to 388 form the HIN-200 domain; the sequence is TVPKEPSREE…SVRHSYMQVI (199 aa).

The protein belongs to the HIN-200 family. In terms of tissue distribution, constitutively expressed in the thymus, bone marrow and spleen. Isoform 1 and isoform 3 are present in liver (at protein level).

It localises to the nucleus. The chain is Interferon-activable protein 203 (Ifi203) from Mus musculus (Mouse).